The following is a 236-amino-acid chain: Uridylate kinase (236 aa).

ATP is bound at residue K12–G15. Residues G20–G25 are involved in allosteric activation by GTP. A UMP-binding site is contributed by G54. ATP contacts are provided by G55 and R59. UMP is bound by residues D72 and T133–T140. ATP is bound by residues Y166 and D169.

The protein belongs to the UMP kinase family. As to quaternary structure, homohexamer.

The protein localises to the cytoplasm. It carries out the reaction UMP + ATP = UDP + ADP. Its pathway is pyrimidine metabolism; CTP biosynthesis via de novo pathway; UDP from UMP (UMPK route): step 1/1. With respect to regulation, allosterically activated by GTP. Inhibited by UTP. In terms of biological role, catalyzes the reversible phosphorylation of UMP to UDP. This is Uridylate kinase from Clostridium acetobutylicum (strain ATCC 824 / DSM 792 / JCM 1419 / IAM 19013 / LMG 5710 / NBRC 13948 / NRRL B-527 / VKM B-1787 / 2291 / W).